We begin with the raw amino-acid sequence, 216 residues long: Pyrophosphatase PpaX (216 aa).

The active-site Nucleophile is D9.

It belongs to the HAD-like hydrolase superfamily. PpaX family. Mg(2+) is required as a cofactor.

The catalysed reaction is diphosphate + H2O = 2 phosphate + H(+). In terms of biological role, hydrolyzes pyrophosphate formed during P-Ser-HPr dephosphorylation by HPrK/P. Might play a role in controlling the intracellular pyrophosphate pool. The protein is Pyrophosphatase PpaX of Bacillus cereus (strain ATCC 10987 / NRS 248).